A 113-amino-acid chain; its full sequence is MAALWLQAFSLLVLMMVSWPGSQAVGGPQHLCGSHLVDALYLVCGDRGFFYNPRRDVDPLLGFLPPKAGGAVVQGGENEVTFKDQMEMMVKRGIVEECCHKPCTIFDLQNYCN.

The N-terminal stretch at Met-1 to Ala-24 is a signal peptide. 3 disulfide bridges follow: Cys-32–Cys-99, Cys-44–Cys-112, and Cys-98–Cys-103. Residues Asp-56–Val-90 constitute a propeptide, c peptide.

Belongs to the insulin family. As to quaternary structure, heterodimer of a B chain and an A chain linked by two disulfide bonds.

It localises to the secreted. In terms of biological role, insulin decreases blood glucose concentration. It increases cell permeability to monosaccharides, amino acids and fatty acids. It accelerates glycolysis, the pentose phosphate cycle, and glycogen synthesis in liver. This Oreochromis niloticus (Nile tilapia) protein is Insulin (ins).